A 184-amino-acid polypeptide reads, in one-letter code: ATP-dependent protease subunit HslV (184 aa).

Thr-12 is a catalytic residue. Positions 167, 170, and 173 each coordinate Na(+).

Belongs to the peptidase T1B family. HslV subfamily. A double ring-shaped homohexamer of HslV is capped on each side by a ring-shaped HslU homohexamer. The assembly of the HslU/HslV complex is dependent on binding of ATP.

It is found in the cytoplasm. The enzyme catalyses ATP-dependent cleavage of peptide bonds with broad specificity.. Its activity is regulated as follows. Allosterically activated by HslU binding. Its function is as follows. Protease subunit of a proteasome-like degradation complex believed to be a general protein degrading machinery. This chain is ATP-dependent protease subunit HslV, found in Wolbachia pipientis subsp. Culex pipiens (strain wPip).